Consider the following 264-residue polypeptide: Thymidylate synthase (264 aa).

Arg21 is a dUMP binding site. His51 serves as a coordination point for (6R)-5,10-methylene-5,6,7,8-tetrahydrofolate. Position 126 to 127 (126 to 127 (RR)) interacts with dUMP. The active-site Nucleophile is Cys146. DUMP is bound by residues 166–169 (RSCD), Asn177, and 207–209 (HLY). Residue Asp169 coordinates (6R)-5,10-methylene-5,6,7,8-tetrahydrofolate. Ala263 serves as a coordination point for (6R)-5,10-methylene-5,6,7,8-tetrahydrofolate.

It belongs to the thymidylate synthase family. Bacterial-type ThyA subfamily. In terms of assembly, homodimer.

It is found in the cytoplasm. It carries out the reaction dUMP + (6R)-5,10-methylene-5,6,7,8-tetrahydrofolate = 7,8-dihydrofolate + dTMP. Its pathway is pyrimidine metabolism; dTTP biosynthesis. Functionally, catalyzes the reductive methylation of 2'-deoxyuridine-5'-monophosphate (dUMP) to 2'-deoxythymidine-5'-monophosphate (dTMP) while utilizing 5,10-methylenetetrahydrofolate (mTHF) as the methyl donor and reductant in the reaction, yielding dihydrofolate (DHF) as a by-product. This enzymatic reaction provides an intracellular de novo source of dTMP, an essential precursor for DNA biosynthesis. This chain is Thymidylate synthase, found in Hamiltonella defensa subsp. Acyrthosiphon pisum (strain 5AT).